The chain runs to 234 residues: ATP synthase subunit delta, chloroplastic (234 aa).

The transit peptide at 1 to 47 directs the protein to the chloroplast; sequence MASLQQTLFSLQSKLPPSSFQIARSLPLRKTFPIRINNGGNAAGARM. At S48 the chain carries N-acetylserine. An N-linked (GlcNAc...) asparagine glycan is attached at N66. Phosphothreonine is present on T234.

This sequence belongs to the ATPase delta chain family. In terms of assembly, F-type ATPases have 2 components, F(1) - the catalytic core - and F(0) - the membrane proton channel. F(1) has five subunits: alpha(3), beta(3), gamma(1), delta(1), epsilon(1). CF(0) has four main subunits: a(1), b(1), b'(1) and c(10-14). The alpha and beta chains form an alternating ring which encloses part of the gamma chain. F(1) is attached to F(0) by a central stalk formed by the gamma and epsilon chains, while a peripheral stalk is formed by the delta, b and b' chains.

The protein resides in the plastid. It localises to the chloroplast thylakoid membrane. F(1)F(0) ATP synthase produces ATP from ADP in the presence of a proton or sodium gradient. F-type ATPases consist of two structural domains, F(1) containing the extramembraneous catalytic core and F(0) containing the membrane proton channel, linked together by a central stalk and a peripheral stalk. During catalysis, ATP synthesis in the catalytic domain of F(1) is coupled via a rotary mechanism of the central stalk subunits to proton translocation (Potential). Essential for photosynthesis, probably by facilitating electron transport in both photosystems I and II. Its function is as follows. This protein is part of the stalk that links CF(0) to CF(1). It either transmits conformational changes from CF(0) to CF(1) or is implicated in proton conduction. This chain is ATP synthase subunit delta, chloroplastic, found in Arabidopsis thaliana (Mouse-ear cress).